The sequence spans 255 residues: Syntaxin-6 (255 aa).

Residue S2 is modified to N-acetylserine. Phosphoserine is present on S2. Residues 2–168 (SMEDPFFVVK…QAQQQLIVEQ (167 aa)) are required for interaction with VPS51. At 2-234 (SMEDPFFVVK…VSHMTSDRRQ (233 aa)) the chain is on the cytoplasmic side. A coiled-coil region spans residues 41–74 (EEIDWTTNELRNNLRSIEWDLEDLDETISIVEAN). S129 and S152 each carry phosphoserine. The t-SNARE coiled-coil homology domain occupies 163 to 225 (QLIVEQQDEQ…DNVMKKLAKV (63 aa)). The chain crosses the membrane as a helical; Anchor for type IV membrane protein span at residues 235–255 (WCAIAILFAVLVVVLILFLVL).

It belongs to the syntaxin family. Identified in a complex containing STX6, STX12 and VAMP4. This complex also includes VTI1A. Binds EEA1. Interacts with VPS45A and GOPC. Interacts with MARCHF2; the interaction promotes MARCHF2-mediated ubiquitination and degradation of CFTR. Interacts with MARCHF3. Interacts with BLTP3B (via C-terminal coiled-coil domain). Interacts with BAIAP3; this interaction is increased in the presence of calcium. Interacts with VPS13B.

It localises to the golgi apparatus membrane. The protein resides in the golgi apparatus. It is found in the trans-Golgi network membrane. Its subcellular location is the recycling endosome membrane. SNARE promoting movement of transport vesicles to target membranes. Targets endosomes to the trans-Golgi network, and may therefore function in retrograde trafficking. Together with SNARE STX12, promotes movement of vesicles from endosomes to the cell membrane, and may therefore function in the endocytic recycling pathway. This Mus musculus (Mouse) protein is Syntaxin-6 (Stx6).